Consider the following 405-residue polypeptide: Arginine deiminase (405 aa).

Cys395 serves as the catalytic Amidino-cysteine intermediate.

The protein belongs to the arginine deiminase family.

The protein localises to the cytoplasm. It carries out the reaction L-arginine + H2O = L-citrulline + NH4(+). The protein operates within amino-acid degradation; L-arginine degradation via ADI pathway; carbamoyl phosphate from L-arginine: step 1/2. This chain is Arginine deiminase, found in Rhodococcus erythropolis (strain PR4 / NBRC 100887).